The following is a 740-amino-acid chain: Ion-translocating oxidoreductase complex subunit C (740 aa).

2 4Fe-4S ferredoxin-type domains span residues 369-397 (GEPQ…QQLY) and 407-436 (KATT…VQYF). Positions 377, 380, 383, 387, 416, 419, 422, and 426 each coordinate [4Fe-4S] cluster. 2 disordered regions span residues 571-590 (LEQQ…RKAA) and 602-716 (KLEQ…DPRK). Composition is skewed to low complexity over residues 573-583 (QQQANAEPEQQ) and 637-647 (QQQANAEPEQQ).

Belongs to the 4Fe4S bacterial-type ferredoxin family. RnfC subfamily. In terms of assembly, the complex is composed of six subunits: RsxA, RsxB, RsxC, RsxD, RsxE and RsxG. It depends on [4Fe-4S] cluster as a cofactor.

The protein localises to the cell inner membrane. In terms of biological role, part of a membrane-bound complex that couples electron transfer with translocation of ions across the membrane. Required to maintain the reduced state of SoxR. Probably transfers electron from NAD(P)H to SoxR. This Escherichia coli (strain K12) protein is Ion-translocating oxidoreductase complex subunit C.